Reading from the N-terminus, the 458-residue chain is Phenylalanine-specific permease (458 aa).

Topologically, residues 1 to 27 (MKNASTVSEDTASNQEPTLHRGLHNRH) are cytoplasmic. Residues 28–48 (IQLIALGGAIGTGLFLGIGPA) form a helical membrane-spanning segment. Topologically, residues 49-50 (IQ) are periplasmic. A helical transmembrane segment spans residues 51 to 71 (MAGPAVLLGYGVAGIIAFLIM). The Cytoplasmic segment spans residues 72-105 (RQLGEMVVEEPVSGSFAHFAYKYWGPFAGFLSGW). Residues 106–126 (NYWVMFVLVGMAELTAAGIYM) form a helical membrane-spanning segment. Topologically, residues 127-132 (QYWFPD) are periplasmic. The helical transmembrane segment at 133–153 (VPTWIWAAAFFIIINAVNLVN) threads the bilayer. Topologically, residues 154-160 (VRLYGET) are cytoplasmic. The helical transmembrane segment at 161 to 181 (EFWFALIKVLAIIGMIGFGLW) threads the bilayer. The Periplasmic segment spans residues 182–196 (LLFSGHGGEKASIDN). The helical transmembrane segment at 197 to 217 (LWRYGGFFATGWNGLILSLAV) threads the bilayer. Residues 218 to 250 (IMFSFGGLELIGITAAEARDPEKSIPKAVNQVV) are Cytoplasmic-facing. The chain crosses the membrane as a helical span at residues 251–271 (YRILLFYIGSLVVLLALYPWV). At 272-288 (EVKSNSSPFVMIFHNLD) the chain is on the periplasmic side. Residues 289-309 (SNVVASALNFVILVASLSVYN) traverse the membrane as a helical segment. At 310–341 (SGVYSNSRMLFGLSVQGNAPKFLTRVSRRGVP) the chain is on the cytoplasmic side. The helical transmembrane segment at 342–362 (INSLMLSGAITSLVVLINYLL) threads the bilayer. Over 363-367 (PQKAF) the chain is Periplasmic. Residues 368-388 (GLLMALVVATLLLNWIMICLA) traverse the membrane as a helical segment. The Cytoplasmic portion of the chain corresponds to 389 to 411 (HLRFRAAMRRQGRETQFKALLYP). A helical membrane pass occupies residues 412-432 (FGNYLCIAFLGMILLLMCTMD). Residues 433–434 (DM) are Periplasmic-facing. Residues 435 to 455 (RLSAILLPVWIVFLFMAFKTL) form a helical membrane-spanning segment. Over 456–458 (RRK) the chain is Cytoplasmic.

The protein belongs to the amino acid-polyamine-organocation (APC) superfamily. Amino acid transporter (AAT) (TC 2.A.3.1) family.

It localises to the cell inner membrane. It carries out the reaction L-phenylalanine(in) + H(+)(in) = L-phenylalanine(out) + H(+)(out). Its function is as follows. Permease that is involved in the active transport across the cytoplasmic membrane of phenylalanine. Can also transport tyrosine, but not tryptophan. This is Phenylalanine-specific permease from Escherichia coli (strain K12).